A 113-amino-acid chain; its full sequence is Coat protein TP1 (113 aa).

It is found in the virion. The protein is Coat protein TP1 of Thermoproteus tenax virus 1 (strain KRA1) (TTV1).